Here is a 618-residue protein sequence, read N- to C-terminus: UvrABC system protein C (618 aa).

Residues 13–92 (DKPGVYLMKN…IKKYRPKYNI (80 aa)) enclose the GIY-YIG domain. The UVR domain occupies 204 to 239 (LDIVENFKLNMERAAENLEFEKAAMLRDKINIIEKI).

The protein belongs to the UvrC family. As to quaternary structure, interacts with UvrB in an incision complex.

It localises to the cytoplasm. Functionally, the UvrABC repair system catalyzes the recognition and processing of DNA lesions. UvrC both incises the 5' and 3' sides of the lesion. The N-terminal half is responsible for the 3' incision and the C-terminal half is responsible for the 5' incision. This chain is UvrABC system protein C, found in Clostridium botulinum (strain Langeland / NCTC 10281 / Type F).